Here is a 530-residue protein sequence, read N- to C-terminus: ATP synthase subunit alpha (530 aa).

169–176 provides a ligand contact to ATP; that stretch reads GDRQTGKT.

The protein belongs to the ATPase alpha/beta chains family. In terms of assembly, F-type ATPases have 2 components, CF(1) - the catalytic core - and CF(0) - the membrane proton channel. CF(1) has five subunits: alpha(3), beta(3), gamma(1), delta(1), epsilon(1). CF(0) has three main subunits: a(1), b(2) and c(9-12). The alpha and beta chains form an alternating ring which encloses part of the gamma chain. CF(1) is attached to CF(0) by a central stalk formed by the gamma and epsilon chains, while a peripheral stalk is formed by the delta and b chains.

The protein localises to the cell membrane. It carries out the reaction ATP + H2O + 4 H(+)(in) = ADP + phosphate + 5 H(+)(out). Produces ATP from ADP in the presence of a proton gradient across the membrane. The alpha chain is a regulatory subunit. The sequence is that of ATP synthase subunit alpha from Mycoplasmopsis synoviae (strain 53) (Mycoplasma synoviae).